We begin with the raw amino-acid sequence, 309 residues long: HPr kinase/phosphorylase (309 aa).

Catalysis depends on residues histidine 138 and lysine 159. ATP is bound at residue 153–160 (GQSGVGKS). Serine 160 is a binding site for Mg(2+). Aspartate 177 serves as the catalytic Proton acceptor; for phosphorylation activity. Proton donor; for dephosphorylation activity. The important for the catalytic mechanism of both phosphorylation and dephosphorylation stretch occupies residues 201 to 210 (LEIRGLGIIN). Glutamate 202 contacts Mg(2+). Residue arginine 243 is part of the active site. The tract at residues 264–269 (PVRPGR) is important for the catalytic mechanism of dephosphorylation.

It belongs to the HPrK/P family. Homohexamer. The cofactor is Mg(2+).

It catalyses the reaction [HPr protein]-L-serine + ATP = [HPr protein]-O-phospho-L-serine + ADP + H(+). The enzyme catalyses [HPr protein]-O-phospho-L-serine + phosphate + H(+) = [HPr protein]-L-serine + diphosphate. Functionally, catalyzes the ATP- as well as the pyrophosphate-dependent phosphorylation of a specific serine residue in HPr, a phosphocarrier protein of the phosphoenolpyruvate-dependent sugar phosphotransferase system (PTS). HprK/P also catalyzes the pyrophosphate-producing, inorganic phosphate-dependent dephosphorylation (phosphorolysis) of seryl-phosphorylated HPr (P-Ser-HPr). The two antagonistic activities of HprK/P are regulated by several intracellular metabolites, which change their concentration in response to the absence or presence of rapidly metabolisable carbon sources (glucose, fructose, etc.) in the growth medium. Also phosphorylates/dephosphorylates the HPr-like catabolite repression protein crh on a specific serine residue. Therefore, by controlling the phosphorylation state of HPr and crh, HPrK/P is a sensor enzyme that plays a major role in the regulation of carbon metabolism and sugar transport: it mediates carbon catabolite repression (CCR), and regulates PTS-catalyzed carbohydrate uptake and inducer exclusion. The chain is HPr kinase/phosphorylase from Bacillus anthracis (strain A0248).